The sequence spans 236 residues: Venom metalloproteinase antarease-like TfasMP_A (236 aa).

The Peptidase M12B domain maps to 4 to 232 (IVVEYYIVTD…KPAASCIFEQ (229 aa)). Position 161 (His161) interacts with Zn(2+). Glu162 is a catalytic residue. Zn(2+)-binding residues include His165 and His171.

This sequence belongs to the venom metalloproteinase (M12B) family. Zn(2+) serves as cofactor. In terms of processing, contains several disulfide bonds. As to expression, expressed by the venom gland.

The protein resides in the secreted. With respect to regulation, inhibited by EDTA. Functionally, acts as a metalloprotease. Penetrates intact tissue and specifically cleaves the vesicle-associated membrane protein 2 (VAMP2) (part of the SNARE complex) involved in pancreatic secretion, thus disrupting the normal vesicular traffic. This Tityus fasciolatus (Central Brazilian scorpion) protein is Venom metalloproteinase antarease-like TfasMP_A.